The following is a 1070-amino-acid chain: MSQESNGGPAAGGGAAAAPPPPPQYIITTPSEVDPDEVRSMADLELGSPEKQVQVQSQKFSSTSSTTKVATHSFSMSSSAGTTGQQSKQDSAQQIQQLQQLQQLQQLQQQQQQQQSQRIISSSTRSQSLQSSTIVGEATTITSGAAQILSASAAASLAQQLKAQSSTSIITSSEQRTSTSTSSSSSTRYIASGSSNLAGGNSNSASSASSKTRFQSFLQQPEGAHGFLTAHQKHVRQFVRSTSAHSEAAAGVAGARAEKCIRSASTQIDDASVAGVVESAGNLTDSSATGGSMQLSMSKLGLQQSSSILISKSAETIEMKSSSAGMRTQLTLSGGFLAPPGNRKITILSPIHAPPGLHDMLKRAQGRSPLSPRISFPGSDSDLFGFDVENGQGARSPLEGGSPSAGLVLQNLPQRRESFLYRSDSDFEMSPKSMSRNSSIASERFKEQEASILVDRSHGEDLIVTPFAQILASLRSVRNNLLSLTNVPASNKSRRPNQSSSASRSGNPPGAPLSQGEEAYTRLATDTIEELDWCLDQLETIQTHRSVSDMASLKFKRMLNKELSHFSESSRSGNQISEYICSTFLDKQQEFDLPSLRVEDNPELVAANAAAGQQSAGQYARSRSPRGPPMSQISGVKRPLSHTNSFTGERLPTFGVETPRENELGTLLGELDTWGIQIFSIGEFSVNRPLTCVAYTIFQSRELLTSLMIPPKTFLNFMSTLEDHYVKDNPFHNSLHAADVTQSTNVLLNTPALEGVFTPLEVGGALFAACIHDVDHPGLTNQFLVNSSSELALMYNDESVLENHHLAVAFKLLQNQGCDIFCNMQKKQRQTLRKMVIDIVLSTDMSKHMSLLADLKTMVETKKVAGSGVLLLDNYTDRIQVLENLVHCADLSNPTKPLPLYKRWVALLMEEFFLQGDKERESGMDISPMCDRHNATIEKSQVGFIDYIVHPLWETWADLVHPDAQDILDTLEENRDYYQSMIPPSPPPSGVDENPQEDRIRFQVTLEESDQENLAELEEGDESGGESTTTGTTGTTAASALSGAGGGGGGGGGMAPRTGGCQNQPQHGGM.

Disordered stretches follow at residues 1–91, 166–215, 487–516, and 615–653; these read MSQE…KQDS, STSI…TRFQ, VPASNKSRRPNQSSSASRSGNPPGAPLSQG, and SAGQYARSRSPRGPPMSQISGVKRPLSHTNSFTGERLPT. Residues 51 to 69 show a composition bias toward low complexity; that stretch reads KQVQVQSQKFSSTSSTTKV. Positions 70-84 are enriched in polar residues; it reads ATHSFSMSSSAGTTG. The segment covering 166–210 has biased composition (low complexity); the sequence is STSIITSSEQRTSTSTSSSSSTRYIASGSSNLAGGNSNSASSASS. A compositionally biased stretch (polar residues) spans 488–506; sequence PASNKSRRPNQSSSASRSG. The region spanning 656–985 is the PDEase domain; it reads VETPRENELG…DYYQSMIPPS (330 aa). Histidine 732 (proton donor) is an active-site residue. A 3',5'-cyclic AMP-binding site is contributed by 732–736; sequence HNSLH. Residues histidine 736, histidine 772, aspartate 773, and aspartate 890 each contribute to the a divalent metal cation site. Positions 773, 890, and 941 each coordinate 3',5'-cyclic AMP. The span at 1007–1024 shows a compositional bias: acidic residues; the sequence is EESDQENLAELEEGDESG. Positions 1007–1070 are disordered; the sequence is EESDQENLAE…CQNQPQHGGM (64 aa). Residues 1025 to 1042 show a composition bias toward low complexity; that stretch reads GESTTTGTTGTTAASALS. Over residues 1043–1054 the composition is skewed to gly residues; that stretch reads GAGGGGGGGGGM. Positions 1060-1070 are enriched in polar residues; the sequence is GCQNQPQHGGM.

This sequence belongs to the cyclic nucleotide phosphodiesterase family. PDE4 subfamily. Monomer. A divalent metal cation serves as cofactor.

It catalyses the reaction 3',5'-cyclic AMP + H2O = AMP + H(+). It functions in the pathway purine metabolism; 3',5'-cyclic AMP degradation; AMP from 3',5'-cyclic AMP: step 1/1. Functionally, hydrolyzes the second messenger cAMP, which is a key regulator of many important physiological processes. Vital for female fertility. Required for learning/memory. The chain is 3',5'-cyclic-AMP phosphodiesterase (dnc) from Drosophila melanogaster (Fruit fly).